Here is a 58-residue protein sequence, read N- to C-terminus: Large ribosomal subunit protein bL32c (58 aa).

The interval 1–23 (MAVPKKRTSKAKKNARKSVWKKK) is disordered.

This sequence belongs to the bacterial ribosomal protein bL32 family.

The protein resides in the plastid. The protein localises to the chloroplast. This is Large ribosomal subunit protein bL32c (rpl32-A) from Trieres chinensis (Marine centric diatom).